The primary structure comprises 381 residues: PqqA peptide cyclase (381 aa).

The region spanning 12 to 228 (VGPPLWLLAE…AEYRQRLAAE (217 aa)) is the Radical SAM core domain. [4Fe-4S] cluster is bound by residues cysteine 26, cysteine 30, and cysteine 33.

This sequence belongs to the radical SAM superfamily. PqqE family. In terms of assembly, interacts with PqqD. The interaction is necessary for activity of PqqE. The cofactor is [4Fe-4S] cluster.

It catalyses the reaction [PQQ precursor protein] + S-adenosyl-L-methionine = E-Y cross-linked-[PQQ precursor protein] + 5'-deoxyadenosine + L-methionine + H(+). The protein operates within cofactor biosynthesis; pyrroloquinoline quinone biosynthesis. In terms of biological role, catalyzes the cross-linking of a glutamate residue and a tyrosine residue in the PqqA protein as part of the biosynthesis of pyrroloquinoline quinone (PQQ). This is PqqA peptide cyclase from Pseudomonas aeruginosa (strain LESB58).